Consider the following 205-residue polypeptide: Hydrogenase-4 component A (205 aa).

4Fe-4S ferredoxin-type domains lie at 2–31 (NRFV…TQGL), 41–72 (KTST…SQRD), 73–102 (DAIQ…ASGS), and 140–172 (QTVA…LITG). 16 residues coordinate [4Fe-4S] cluster: cysteine 12, cysteine 15, cysteine 18, cysteine 22, cysteine 51, cysteine 54, cysteine 59, cysteine 63, cysteine 82, cysteine 85, cysteine 88, cysteine 92, cysteine 146, cysteine 149, cysteine 158, and cysteine 162.

Requires [4Fe-4S] cluster as cofactor.

Functionally, probable electron transfer protein for hydrogenase 4. The protein is Hydrogenase-4 component A of Escherichia coli (strain K12).